The following is a 64-amino-acid chain: Large ribosomal subunit protein bL35 (64 aa).

The protein belongs to the bacterial ribosomal protein bL35 family.

This Ectopseudomonas mendocina (strain ymp) (Pseudomonas mendocina) protein is Large ribosomal subunit protein bL35.